The primary structure comprises 394 residues: Elongation factor Tu (394 aa).

Residues 10 to 204 (KPHVNIGTIG…AVDSYIPQPV (195 aa)) form the tr-type G domain. The tract at residues 19-26 (GHVDHGKT) is G1. Residue 19–26 (GHVDHGKT) coordinates GTP. T26 lines the Mg(2+) pocket. Residues 60–64 (GITIS) form a G2 region. A G3 region spans residues 81–84 (DCPG). Residues 81–85 (DCPGH) and 136–139 (NKID) each bind GTP. Residues 136–139 (NKID) form a G4 region. Residues 174-176 (SAL) form a G5 region.

Belongs to the TRAFAC class translation factor GTPase superfamily. Classic translation factor GTPase family. EF-Tu/EF-1A subfamily. Monomer.

Its subcellular location is the cytoplasm. The catalysed reaction is GTP + H2O = GDP + phosphate + H(+). GTP hydrolase that promotes the GTP-dependent binding of aminoacyl-tRNA to the A-site of ribosomes during protein biosynthesis. The protein is Elongation factor Tu of Rickettsia conorii (strain ATCC VR-613 / Malish 7).